The chain runs to 96 residues: Aspartyl/glutamyl-tRNA(Asn/Gln) amidotransferase subunit C (96 aa).

Residues 64 to 96 are disordered; it reads REDEPEPGLPREEVLKNAPDQQDGQFRVPAILE.

It belongs to the GatC family. In terms of assembly, heterotrimer of A, B and C subunits.

The enzyme catalyses L-glutamyl-tRNA(Gln) + L-glutamine + ATP + H2O = L-glutaminyl-tRNA(Gln) + L-glutamate + ADP + phosphate + H(+). It carries out the reaction L-aspartyl-tRNA(Asn) + L-glutamine + ATP + H2O = L-asparaginyl-tRNA(Asn) + L-glutamate + ADP + phosphate + 2 H(+). Allows the formation of correctly charged Asn-tRNA(Asn) or Gln-tRNA(Gln) through the transamidation of misacylated Asp-tRNA(Asn) or Glu-tRNA(Gln) in organisms which lack either or both of asparaginyl-tRNA or glutaminyl-tRNA synthetases. The reaction takes place in the presence of glutamine and ATP through an activated phospho-Asp-tRNA(Asn) or phospho-Glu-tRNA(Gln). In Geobacillus thermodenitrificans (strain NG80-2), this protein is Aspartyl/glutamyl-tRNA(Asn/Gln) amidotransferase subunit C.